Reading from the N-terminus, the 264-residue chain is Replication-associated protein A (264 aa).

The region spanning 10–123 (RVYSKYLFLT…DVNTAEWGTF (114 aa)) is the CRESS-DNA virus Rep endonuclease domain. The RCR-1 signature appears at 17 to 20 (FLTY). 3 residues coordinate a divalent metal cation: Glu-51, His-59, and His-61. The RCR-2 signature appears at 59 to 61 (HLH). Tyr-106 (for DNA cleavage activity) is an active-site residue. The RCR-3 motif lies at 106–109 (YITK). Glu-110 lines the a divalent metal cation pocket. An oligomerization region spans residues 173-185 (TARHLFPDPVATY). The LXCXE motif, interaction with host RBR1 motif lies at 194–198 (LICHE). Residues 237 to 264 (YSRSHRGGISPSTSAGQPEQERLPGQGL) form a disordered region.

It belongs to the geminiviridae Rep protein family. In terms of assembly, homooligomer. Interacts (via LXCXE domain) with host retinoblastoma-related protein 1 (RBR1), and may thereby deregulate the host cell cycle. Part of the C- and V-complexes which are RepA-Rep-DNA complexes involved in the c-sense and v-sense transcription. Mg(2+) is required as a cofactor. Mn(2+) serves as cofactor.

The protein resides in the host nucleus. The protein localises to the host cytoplasm. Implicated in enhancement of V-sense gene expression. Acts a an inhibitor of C-sense gene transcription. In Wheat dwarf virus (isolate Sweden) (WDV), this protein is Replication-associated protein A.